The primary structure comprises 309 residues: GTP cyclohydrolase MptA (309 aa).

It belongs to the GTP cyclohydrolase IV family. Homodimer. The cofactor is Fe(2+).

It carries out the reaction GTP + H2O = 7,8-dihydroneopterin 2',3'-cyclic phosphate + formate + diphosphate + H(+). It functions in the pathway cofactor biosynthesis; 5,6,7,8-tetrahydromethanopterin biosynthesis. Converts GTP to 7,8-dihydro-D-neopterin 2',3'-cyclic phosphate, the first intermediate in the biosynthesis of coenzyme methanopterin. The protein is GTP cyclohydrolase MptA of Methanococcus aeolicus (strain ATCC BAA-1280 / DSM 17508 / OCM 812 / Nankai-3).